The sequence spans 1009 residues: Serine/threonine-protein phosphatase BSL2 homolog (1009 aa).

The disordered stretch occupies residues 1–48; sequence MDVDSRMTTESDSDSDAAAQGGGGGGFGSETSSASPSAPGTPTAMGAG. Low complexity predominate over residues 29-45; that stretch reads SETSSASPSAPGTPTAM. Kelch repeat units follow at residues 136-182, 240-288, 293-344, 349-396, and 417-463; these read SSAG…VATA, FLLT…TASA, LLLL…FVNA, SGGA…DAAG, and MIYV…IQAG. The interval 549 to 572 is disordered; sequence QVNGEAEHSPDREQSPDATPSVKQ. A compositionally biased stretch (basic and acidic residues) spans 553–563; that stretch reads EAEHSPDREQS. Mn(2+) is bound by residues D711, H713, D745, and N777. H778 serves as the catalytic Proton donor. Residues H830 and H909 each coordinate Mn(2+). The disordered stretch occupies residues 984–1009; it reads NANRPPTPTRGRPQAANNDRGSLAWI.

It belongs to the PPP phosphatase family. BSU subfamily. The cofactor is Mn(2+).

Its subcellular location is the nucleus. The catalysed reaction is O-phospho-L-seryl-[protein] + H2O = L-seryl-[protein] + phosphate. The enzyme catalyses O-phospho-L-threonyl-[protein] + H2O = L-threonyl-[protein] + phosphate. This Oryza sativa subsp. japonica (Rice) protein is Serine/threonine-protein phosphatase BSL2 homolog (BSL2).